The primary structure comprises 149 residues: Large ribosomal subunit protein uL16 (149 aa).

Belongs to the universal ribosomal protein uL16 family. In terms of assembly, part of the 50S ribosomal subunit.

Functionally, binds 23S rRNA and is also seen to make contacts with the A and possibly P site tRNAs. This chain is Large ribosomal subunit protein uL16, found in Dehalococcoides mccartyi (strain ATCC BAA-2100 / JCM 16839 / KCTC 5957 / BAV1).